The following is a 296-amino-acid chain: Lipoyl synthase (296 aa).

Residues Cys37, Cys42, Cys48, Cys63, Cys67, Cys70, and Ser276 each coordinate [4Fe-4S] cluster. The region spanning 49-265 (WSKKHTTVMI…ERVAKTKGFL (217 aa)) is the Radical SAM core domain.

Belongs to the radical SAM superfamily. Lipoyl synthase family. [4Fe-4S] cluster is required as a cofactor.

It is found in the cytoplasm. It catalyses the reaction [[Fe-S] cluster scaffold protein carrying a second [4Fe-4S](2+) cluster] + N(6)-octanoyl-L-lysyl-[protein] + 2 oxidized [2Fe-2S]-[ferredoxin] + 2 S-adenosyl-L-methionine + 4 H(+) = [[Fe-S] cluster scaffold protein] + N(6)-[(R)-dihydrolipoyl]-L-lysyl-[protein] + 4 Fe(3+) + 2 hydrogen sulfide + 2 5'-deoxyadenosine + 2 L-methionine + 2 reduced [2Fe-2S]-[ferredoxin]. It functions in the pathway protein modification; protein lipoylation via endogenous pathway; protein N(6)-(lipoyl)lysine from octanoyl-[acyl-carrier-protein]: step 2/2. Catalyzes the radical-mediated insertion of two sulfur atoms into the C-6 and C-8 positions of the octanoyl moiety bound to the lipoyl domains of lipoate-dependent enzymes, thereby converting the octanoylated domains into lipoylated derivatives. This chain is Lipoyl synthase, found in Rickettsia massiliae (strain Mtu5).